We begin with the raw amino-acid sequence, 221 residues long: Eukaryotic translation initiation factor 3 subunit K (221 aa).

A PCI domain is found at 46 to 207 (YDLEANLACL…NIKTKHITEK (162 aa)).

This sequence belongs to the eIF-3 subunit K family. As to quaternary structure, component of the eukaryotic translation initiation factor 3 (eIF-3) complex.

The protein resides in the cytoplasm. Component of the eukaryotic translation initiation factor 3 (eIF-3) complex, which is involved in protein synthesis of a specialized repertoire of mRNAs and, together with other initiation factors, stimulates binding of mRNA and methionyl-tRNAi to the 40S ribosome. The eIF-3 complex specifically targets and initiates translation of a subset of mRNAs involved in cell proliferation. This chain is Eukaryotic translation initiation factor 3 subunit K, found in Aedes aegypti (Yellowfever mosquito).